We begin with the raw amino-acid sequence, 551 residues long: Solute carrier family 22 member 27 (551 aa).

At 1-15 the chain is on the cytoplasmic side; it reads MSFQELLNQVGSLGR. A helical transmembrane segment spans residues 16 to 36; that stretch reads FQILQIVFLLLLNAIVVPHIA. Residues 37 to 145 are Extracellular-facing; the sequence is MENFTAAIPN…DLVCESQALN (109 aa). N-linked (GlcNAc...) asparagine glycans are attached at residues asparagine 39, asparagine 56, asparagine 62, asparagine 102, and asparagine 107. A helical transmembrane segment spans residues 146 to 166; sequence SVTKFSFMIGLFIGGIICGHL. The Cytoplasmic segment spans residues 167–173; the sequence is SDRLGRK. The chain crosses the membrane as a helical span at residues 174–194; sequence FILTCALLQFAITETCVAFAP. Topologically, residues 195-203 are extracellular; it reads SFFIYCSLR. Residues 204 to 224 traverse the membrane as a helical segment; sequence FLAGLSVEPILVNSHLLMLEW. Residues 225–234 lie on the Cytoplasmic side of the membrane; the sequence is TSPKFLTMMA. A helical transmembrane segment spans residues 235–255; it reads ALLSCAPNIGYMISAGLAFLF. The Extracellular portion of the chain corresponds to 256–258; it reads RIW. A helical transmembrane segment spans residues 259 to 279; the sequence is HHLQLTMSVPIFFFLILTRWL. Over 280–348 the chain is Cytoplasmic; the sequence is SESARWLIVT…LFHTSILRKR (69 aa). The helical transmembrane segment at 349–369 threads the bilayer; that stretch reads ICVLSFMRLFFTVSIFGLAVH. Residues 370-376 lie on the Extracellular side of the membrane; the sequence is LQHLSSN. The helical transmembrane segment at 377–397 threads the bilayer; the sequence is IILLQFLISALAILVSVIGPF. Over 398-405 the chain is Cytoplasmic; the sequence is VLNHIGRR. A helical transmembrane segment spans residues 406–426; it reads ITYLVLMSLRGIFILIAVFVP. The Extracellular portion of the chain corresponds to 427-432; the sequence is QEMQTL. A helical transmembrane segment spans residues 433–453; that stretch reads RIIMATLAEGISSLCVGVSRL. Over 454–467 the chain is Cytoplasmic; sequence HTNELLPTTLRATA. Residues 468–488 traverse the membrane as a helical segment; sequence VGVIGFFGNSGSFLSPLFMLL. Topologically, residues 489-494 are extracellular; sequence ATYYAN. Residues 495 to 515 traverse the membrane as a helical segment; the sequence is MPWIFYGGFSIFNAFTVFLLP. Topologically, residues 516–551 are cytoplasmic; sequence ETKNQPLPDSTHDVGNDWKESRKGKKEDPIIKVTRF. The interval 523–551 is disordered; it reads PDSTHDVGNDWKESRKGKKEDPIIKVTRF. The segment covering 525-545 has biased composition (basic and acidic residues); it reads STHDVGNDWKESRKGKKEDPI.

Belongs to the major facilitator (TC 2.A.1) superfamily. Organic cation transporter (TC 2.A.1.19) family. Expressed in proximal kidney tubules, and in liver hepatocytes (at protein level).

The protein resides in the cell membrane. Does not appear to have transporter activity. Functionally, sodium-independent organic anion transporter which exhibits high specificity for L-carnitine. Can also transport salicylic acid and the drug cimetidine. This is Solute carrier family 22 member 27 from Mus musculus (Mouse).